Consider the following 354-residue polypeptide: Phosphoribosylformylglycinamidine cyclo-ligase (354 aa).

The protein belongs to the AIR synthase family.

Its subcellular location is the cytoplasm. The enzyme catalyses 2-formamido-N(1)-(5-O-phospho-beta-D-ribosyl)acetamidine + ATP = 5-amino-1-(5-phospho-beta-D-ribosyl)imidazole + ADP + phosphate + H(+). It participates in purine metabolism; IMP biosynthesis via de novo pathway; 5-amino-1-(5-phospho-D-ribosyl)imidazole from N(2)-formyl-N(1)-(5-phospho-D-ribosyl)glycinamide: step 2/2. This chain is Phosphoribosylformylglycinamidine cyclo-ligase, found in Synechococcus sp. (strain JA-2-3B'a(2-13)) (Cyanobacteria bacterium Yellowstone B-Prime).